We begin with the raw amino-acid sequence, 412 residues long: Major facilitator superfamily domain-containing protein 3 (412 aa).

The next 12 membrane-spanning stretches (helical) occupy residues 10 to 30 (GLYL…PVLL), 40 to 60 (VGLA…APLV), 73 to 93 (STAG…PGAG), 94 to 114 (QAGL…GAAM), 138 to 158 (VQVV…LALL), 166 to 186 (LFLL…AAPA), 209 to 229 (VLAV…KLGE), 250 to 270 (LGLW…SLGG), 291 to 311 (LGGL…GASM), 321 to 341 (ALLS…VTFT), 361 to 381 (LLAT…GGLA), and 384 to 404 (LGPH…VLYL).

The protein belongs to the major facilitator superfamily.

The protein localises to the membrane. The sequence is that of Major facilitator superfamily domain-containing protein 3 (MFSD3) from Homo sapiens (Human).